Reading from the N-terminus, the 129-residue chain is Protein yippee-like (129 aa).

Residues 12-109 enclose the Yippee domain; the sequence is KIYSCKHCGT…LERFKITGPD (98 aa). Residues cysteine 16, cysteine 19, cysteine 72, and cysteine 75 each contribute to the Zn(2+) site.

Belongs to the yippee family.

This Solanum tuberosum (Potato) protein is Protein yippee-like.